Consider the following 162-residue polypeptide: MSEIVIRHAETRDYEAIRQIHAQPEVYCNTLQVPHPSDHMWQERLADRPGIKQLVACIDGDVVGHLTIDVQQRPRRSHVADFGICVDSRWKNRGVASALMREMIEMCDNWLRVDRIELTVFVDNAPAIKVYKKYGFEIEGTGKKYALRNGEYVDAYYMARVK.

Residues 4-162 (IVIRHAETRD…VDAYYMARVK (159 aa)) enclose the N-acetyltransferase domain.

It belongs to the acetyltransferase family.

The catalysed reaction is L-phenylalanine + acetyl-CoA = N-acetyl-L-phenylalanine + CoA + H(+). It carries out the reaction L-methionine + acetyl-CoA = N-acetyl-L-methionine + CoA + H(+). Catalyzes the N-acetylation of L-phenylalanine and L-methionine using acetyl-CoA as acetyl donor in vitro. Cannot accept L-tyrosine as substrate and propionyl-CoA, succinyl-CoA or (S)-methylmalonyl-CoA as acyl donors. Is also able to acetylate and thus detoxify several nonhydrolyzable aminoacyl adenylates, but not the processed form of the peptide-nucleotide antibiotic microcin C (McC). When overproduced, provides complete resistance to leucyl sulfamoyl adenylate (LSA) and partial resistance to alanyl sulfamoyl adenylate (ASA) and phenylalanyl sulfamoyl adenylate (FSA). Therefore, may protect bacteria from various toxic aminoacyl nucleotides, either exogenous or those generated inside the cell during normal metabolism. This is L-amino acid N-acetyltransferase AaaT from Escherichia coli (strain K12).